Reading from the N-terminus, the 776-residue chain is 5-methyltetrahydropteroyltriglutamate--homocysteine methyltransferase (776 aa).

Residues Arg-16–Lys-19 and Lys-112 contribute to the 5-methyltetrahydropteroyltri-L-glutamate site. L-homocysteine is bound by residues Ile-435 to Ser-437 and Glu-488. L-methionine contacts are provided by residues Ile-435 to Ser-437 and Glu-488. Residues Arg-519 to Cys-520 and Trp-565 each bind 5-methyltetrahydropteroyltri-L-glutamate. L-homocysteine is bound at residue Asp-603. L-methionine is bound at residue Asp-603. Glu-609 serves as a coordination point for 5-methyltetrahydropteroyltri-L-glutamate. Zn(2+) contacts are provided by His-645, Cys-647, and Glu-669. Residue His-698 is the Proton donor of the active site. Cys-730 serves as a coordination point for Zn(2+).

The protein belongs to the vitamin-B12 independent methionine synthase family. It depends on Zn(2+) as a cofactor.

It carries out the reaction 5-methyltetrahydropteroyltri-L-glutamate + L-homocysteine = tetrahydropteroyltri-L-glutamate + L-methionine. Its pathway is amino-acid biosynthesis; L-methionine biosynthesis via de novo pathway; L-methionine from L-homocysteine (MetE route): step 1/1. Functionally, catalyzes the transfer of a methyl group from 5-methyltetrahydrofolate to homocysteine resulting in methionine formation. The sequence is that of 5-methyltetrahydropteroyltriglutamate--homocysteine methyltransferase from Ralstonia pickettii (strain 12J).